Consider the following 255-residue polypeptide: Electron transfer flavoprotein subunit beta (255 aa).

Position 2 is an N-acetylalanine (Ala-2). AMP contacts are provided by residues Ala-9, 39 to 42 (NPFC), Cys-66, and 123 to 134 (GKQAIDDDCNQT). Positions 183-205 (ADLRLNEPRYATLPNIMKAKKKK) are recognition loop. At Lys-200 the chain carries N6,N6,N6-trimethyllysine; by ETFBKMT; alternate. At Lys-200 the chain carries N6-acetyllysine; alternate. The residue at position 200 (Lys-200) is an N6-methyllysine; alternate. N6,N6,N6-trimethyllysine; by ETFBKMT is present on Lys-203. Lys-210 carries the post-translational modification N6-acetyllysine; alternate. Position 210 is an N6-succinyllysine; alternate (Lys-210). A phosphoserine mark is found at Ser-223 and Ser-226. Lys-238 carries the N6-acetyllysine modification. Lys-248 is subject to N6-acetyllysine; alternate. Lys-248 is modified (N6-succinyllysine; alternate).

Belongs to the ETF beta-subunit/FixA family. Heterodimer composed of ETFA and ETFB. Identified in a complex that contains ETFA, ETFB and ETFRF1. Interacts with ACADM. Post-translationally, methylated. Trimethylation at Lys-200 and Lys-203 may negatively regulate the activity in electron transfer from acyl-CoA dehydrogenases.

The protein localises to the mitochondrion matrix. Functionally, heterodimeric electron transfer flavoprotein that accepts electrons from several mitochondrial dehydrogenases, including acyl-CoA dehydrogenases, glutaryl-CoA and sarcosine dehydrogenase. It transfers the electrons to the main mitochondrial respiratory chain via ETF-ubiquinone oxidoreductase. Required for normal mitochondrial fatty acid oxidation and normal amino acid metabolism. ETFB binds an AMP molecule that probably has a purely structural role. In Pongo abelii (Sumatran orangutan), this protein is Electron transfer flavoprotein subunit beta.